A 514-amino-acid polypeptide reads, in one-letter code: Putative exoglucanase type C (514 aa).

The signal sequence occupies residues 1 to 17 (MYRIVATASALIAAARA). The tract at residues 18–439 (QQVCSLNTET…RDVPNSKVSF (422 aa)) is catalytic. Glutamate 229 (nucleophile) is an active-site residue. Glutamate 234 acts as the Proton donor in catalysis. Residue asparagine 287 is glycosylated (N-linked (GlcNAc...) asparagine). Residues 408-424 (STKVGSQRGSCATTSGK) are compositionally biased toward polar residues. 2 disordered regions span residues 408-433 (STKV…RDVP) and 448-485 (GSTY…QWGQ). The tract at residues 440–482 (SNIKFGPIGSTYKSDGTTPNPPASSSTTGSSTPTNPPAGSVDQ) is linker. A compositionally biased stretch (low complexity) spans 462-479 (ASSSTTGSSTPTNPPAGS). One can recognise a CBM1 domain in the interval 478-514 (GSVDQWGQCGGQNYSGPTTCKSPFTCKKINDFYSQCQ). Disulfide bonds link cysteine 486–cysteine 503 and cysteine 497–cysteine 513. N-linked (GlcNAc...) asparagine glycosylation occurs at asparagine 490.

Belongs to the glycosyl hydrolase 7 (cellulase C) family.

It catalyses the reaction Hydrolysis of (1-&gt;4)-beta-D-glucosidic linkages in cellulose and cellotetraose, releasing cellobiose from the non-reducing ends of the chains.. This chain is Putative exoglucanase type C, found in Fusarium oxysporum (Fusarium vascular wilt).